The chain runs to 301 residues: Recombination-associated protein RdgC (301 aa).

The protein belongs to the RdgC family.

It localises to the cytoplasm. The protein localises to the nucleoid. In terms of biological role, may be involved in recombination. The polypeptide is Recombination-associated protein RdgC (Pseudoalteromonas atlantica (strain T6c / ATCC BAA-1087)).